The chain runs to 465 residues: GDNF family receptor alpha-2 (465 aa).

The first 21 residues, 1–21, serve as a signal peptide directing secretion; sequence MILANAFCIVLFVDETLRSLA. Cystine bridges form between cysteine 40-cysteine 93, cysteine 47-cysteine 53, cysteine 63-cysteine 78, cysteine 95-cysteine 105, cysteine 159-cysteine 220, cysteine 166-cysteine 172, cysteine 183-cysteine 198, cysteine 193-cysteine 239, cysteine 222-cysteine 227, cysteine 249-cysteine 321, cysteine 256-cysteine 262, cysteine 273-cysteine 291, cysteine 283-cysteine 345, and cysteine 323-cysteine 333. Residues asparagine 355, asparagine 387, and asparagine 412 are each glycosylated (N-linked (GlcNAc...) asparagine). The GPI-anchor amidated serine moiety is linked to residue serine 445. Positions 446 to 465 are cleaved as a propeptide — removed in mature form; it reads RHRAARILPAVPIVLLKLLL.

It belongs to the GDNFR family. Interacts with NRTN ligand and RET: forms a 2:2:2 ternary complex composed of NRTN ligand, GFRA2 and RET receptor.

It localises to the cell membrane. Functionally, receptor for neurturin (NRTN), a growth factor that supports the survival of sympathetic neurons. NRTN-binding leads to autophosphorylation and activation of the RET receptor. This Gallus gallus (Chicken) protein is GDNF family receptor alpha-2 (GFRA2).